A 133-amino-acid chain; its full sequence is Probable mitochondrial pyruvate carrier 2 (133 aa).

Transmembrane regions (helical) follow at residues 40 to 57 (VFFW…AGLA), 73 to 91 (ALFA…ITPI), and 100 to 116 (FFVM…IAHY).

This sequence belongs to the mitochondrial pyruvate carrier (MPC) (TC 2.A.105) family.

It is found in the mitochondrion inner membrane. Its function is as follows. May mediate the uptake of pyruvate into mitochondria. The polypeptide is Probable mitochondrial pyruvate carrier 2 (Caenorhabditis elegans).